We begin with the raw amino-acid sequence, 114 residues long: UPF0342 protein SSP0954 (114 aa).

Belongs to the UPF0342 family.

This Staphylococcus saprophyticus subsp. saprophyticus (strain ATCC 15305 / DSM 20229 / NCIMB 8711 / NCTC 7292 / S-41) protein is UPF0342 protein SSP0954.